An 82-amino-acid polypeptide reads, in one-letter code: Large ribosomal subunit protein bL31B-2 (82 aa).

This sequence belongs to the bacterial ribosomal protein bL31 family. Type B subfamily. In terms of assembly, part of the 50S ribosomal subunit.

The polypeptide is Large ribosomal subunit protein bL31B-2 (Streptomyces avermitilis (strain ATCC 31267 / DSM 46492 / JCM 5070 / NBRC 14893 / NCIMB 12804 / NRRL 8165 / MA-4680)).